The following is a 77-amino-acid chain: Large ribosomal subunit protein uL29 (77 aa).

It belongs to the universal ribosomal protein uL29 family.

The protein is Large ribosomal subunit protein uL29 of Cutibacterium acnes (strain DSM 16379 / KPA171202) (Propionibacterium acnes).